Reading from the N-terminus, the 95-residue chain is Co-chaperonin GroES (95 aa).

This sequence belongs to the GroES chaperonin family. In terms of assembly, heptamer of 7 subunits arranged in a ring. Interacts with the chaperonin GroEL.

Its subcellular location is the cytoplasm. Functionally, together with the chaperonin GroEL, plays an essential role in assisting protein folding. The GroEL-GroES system forms a nano-cage that allows encapsulation of the non-native substrate proteins and provides a physical environment optimized to promote and accelerate protein folding. GroES binds to the apical surface of the GroEL ring, thereby capping the opening of the GroEL channel. This is Co-chaperonin GroES from Aliivibrio salmonicida (strain LFI1238) (Vibrio salmonicida (strain LFI1238)).